A 209-amino-acid chain; its full sequence is Imidazole glycerol phosphate synthase subunit HisH (209 aa).

The Glutamine amidotransferase type-1 domain maps to proline 4 to leucine 209. Cysteine 82 (nucleophile) is an active-site residue. Active-site residues include histidine 190 and glutamate 192.

Heterodimer of HisH and HisF.

It is found in the cytoplasm. It catalyses the reaction 5-[(5-phospho-1-deoxy-D-ribulos-1-ylimino)methylamino]-1-(5-phospho-beta-D-ribosyl)imidazole-4-carboxamide + L-glutamine = D-erythro-1-(imidazol-4-yl)glycerol 3-phosphate + 5-amino-1-(5-phospho-beta-D-ribosyl)imidazole-4-carboxamide + L-glutamate + H(+). It carries out the reaction L-glutamine + H2O = L-glutamate + NH4(+). Its pathway is amino-acid biosynthesis; L-histidine biosynthesis; L-histidine from 5-phospho-alpha-D-ribose 1-diphosphate: step 5/9. Its function is as follows. IGPS catalyzes the conversion of PRFAR and glutamine to IGP, AICAR and glutamate. The HisH subunit catalyzes the hydrolysis of glutamine to glutamate and ammonia as part of the synthesis of IGP and AICAR. The resulting ammonia molecule is channeled to the active site of HisF. This chain is Imidazole glycerol phosphate synthase subunit HisH, found in Leifsonia xyli subsp. xyli (strain CTCB07).